A 68-amino-acid chain; its full sequence is Tabimmunregulin 1 (68 aa).

The N-terminal stretch at 1–26 is a signal peptide; the sequence is MLLKSYVFFLLSLLIVGLFTSRDADA. The propeptide occupies 27–38; sequence QYEDLVTGYLRK.

As to expression, expressed in salivary glands.

The protein localises to the secreted. In terms of biological role, horsefly salivary gland immunosuppressant protein that likely inhibits the host inflammatory response by regulation of anti- and pro-inflammatory cytokines. When tested on mouse splenocytes in the presence of LPS, it increases the secretion of the proinflammatory cytokine interleukin-10 (IL10) and decreases the secretion of the proinflammatory cytokine interferon-gamma (IFNG) in a dose-dependent manner. The polypeptide is Tabimmunregulin 1 (Tabanus yao (Horsefly)).